Consider the following 204-residue polypeptide: Large ribosomal subunit protein eL15 (204 aa).

It belongs to the eukaryotic ribosomal protein eL15 family. Component of the large ribosomal subunit.

Its subcellular location is the cytoplasm. In terms of biological role, component of the large ribosomal subunit. The ribosome is a large ribonucleoprotein complex responsible for the synthesis of proteins in the cell. In Carassius auratus (Goldfish), this protein is Large ribosomal subunit protein eL15 (rpl15).